The chain runs to 338 residues: Protein REG2 (338 aa).

The segment at 1 to 21 (MTLSNCDSLDNLFQDPPEEEE) is disordered.

In terms of biological role, regulatory subunit, binds to type-1 protein phosphatase. Functions with HEX2/REG1 and SNF1 protein kinase to regulate growth. Might regulate SNF1 directly or indirectly. The sequence is that of Protein REG2 (REG2) from Saccharomyces cerevisiae (strain ATCC 204508 / S288c) (Baker's yeast).